The primary structure comprises 140 residues: Putative pre-16S rRNA nuclease (140 aa).

The protein belongs to the YqgF nuclease family.

It is found in the cytoplasm. Its function is as follows. Could be a nuclease involved in processing of the 5'-end of pre-16S rRNA. The sequence is that of Putative pre-16S rRNA nuclease from Aeromonas hydrophila.